Here is a 90-residue protein sequence, read N- to C-terminus: Phosphocarrier protein NPr (90 aa).

Residues 2–90 (TVKQTVEISN…ALFNAGFDED (89 aa)) form the HPr domain. H16 acts as the Pros-phosphohistidine intermediate in catalysis.

The protein belongs to the HPr family.

It localises to the cytoplasm. Component of the phosphoenolpyruvate-dependent nitrogen-metabolic phosphotransferase system (nitrogen-metabolic PTS), that seems to be involved in regulating nitrogen metabolism. The phosphoryl group from phosphoenolpyruvate (PEP) is transferred to the phosphoryl carrier protein NPr by enzyme I-Ntr. Phospho-NPr then transfers it to EIIA-Ntr. Could function in the transcriptional regulation of sigma-54 dependent operons in conjunction with the NPr (PtsO) and EIIA-Ntr (PtsN) proteins. This chain is Phosphocarrier protein NPr (ptsO), found in Klebsiella oxytoca.